We begin with the raw amino-acid sequence, 425 residues long: Proline--tRNA ligase (425 aa).

It belongs to the class-II aminoacyl-tRNA synthetase family. ProS type 2 subfamily. As to quaternary structure, homodimer.

It localises to the cytoplasm. The enzyme catalyses tRNA(Pro) + L-proline + ATP = L-prolyl-tRNA(Pro) + AMP + diphosphate. Catalyzes the attachment of proline to tRNA(Pro) in a two-step reaction: proline is first activated by ATP to form Pro-AMP and then transferred to the acceptor end of tRNA(Pro). This is Proline--tRNA ligase from Wolbachia sp. subsp. Brugia malayi (strain TRS).